We begin with the raw amino-acid sequence, 297 residues long: Formylmethanofuran--tetrahydromethanopterin formyltransferase (297 aa).

It belongs to the FTR family. Homotetramer.

It localises to the cytoplasm. It catalyses the reaction N-formylmethanofuran + 5,6,7,8-tetrahydromethanopterin + H(+) = N(5)-formyl-5,6,7,8-tetrahydromethanopterin + methanofuran. The protein operates within one-carbon metabolism; methanogenesis from CO(2); 5,10-methenyl-5,6,7,8-tetrahydromethanopterin from CO(2): step 2/3. Catalyzes the reversible transfer of a formyl group from formylmethanofuran (formyl-MFR) to tetrahydromethanopterin (H(4)MPT) to produce 5-formyl tetrahydromethanopterin (5-formyl-H(4)MPT) and methanofuran (MFR). This chain is Formylmethanofuran--tetrahydromethanopterin formyltransferase, found in Methanosarcina acetivorans (strain ATCC 35395 / DSM 2834 / JCM 12185 / C2A).